The primary structure comprises 219 residues: Abasic site processing protein YobE (219 aa).

Residue cysteine 2 is the Nucleophile of the active site. Cysteine 2 bears the Thiazolidine linkage to a ring-opened DNA abasic site mark. Residue glutamate 106 is part of the active site.

Belongs to the SOS response-associated peptidase family.

Its activity is regulated as follows. Formation and reversal of DNA-protein cross-link depends on DNA context. Catalyzes formation of the thiazolidine linkage in presence of abasic sites in single-stranded DNA. Mediates the reversal of the thiazolidine cross-link in presence of double stranded DNA. Sensor of abasic sites in single-stranded DNA (ssDNA) required to preserve genome integrity by promoting error-free repair of abasic sites. Recognizes and binds abasic sites in ssDNA at replication forks and chemically modifies the lesion by forming a covalent cross-link with DNA: forms a stable thiazolidine linkage between a ring-opened abasic site and the alpha-amino and sulfhydryl substituents of its N-terminal catalytic cysteine residue. The DNA-protein cross-link is then reversed: able to catalyze the reversal of the thiazolidine cross-link and cycle between a cross-link and a non-cross-linked state depending on DNA context: mediates self-reversal of the thiazolidine cross-link in double stranded DNA. May act as a protease: mediates autocatalytic processing of its N-terminal methionine in order to expose the catalytic cysteine. This chain is Abasic site processing protein YobE (yobE), found in Bacillus subtilis (strain 168).